The primary structure comprises 469 residues: Aspartyl/glutamyl-tRNA(Asn/Gln) amidotransferase subunit B (469 aa).

Belongs to the GatB/GatE family. GatB subfamily. In terms of assembly, heterotrimer of A, B and C subunits.

It carries out the reaction L-glutamyl-tRNA(Gln) + L-glutamine + ATP + H2O = L-glutaminyl-tRNA(Gln) + L-glutamate + ADP + phosphate + H(+). It catalyses the reaction L-aspartyl-tRNA(Asn) + L-glutamine + ATP + H2O = L-asparaginyl-tRNA(Asn) + L-glutamate + ADP + phosphate + 2 H(+). In terms of biological role, allows the formation of correctly charged Asn-tRNA(Asn) or Gln-tRNA(Gln) through the transamidation of misacylated Asp-tRNA(Asn) or Glu-tRNA(Gln) in organisms which lack either or both of asparaginyl-tRNA or glutaminyl-tRNA synthetases. The reaction takes place in the presence of glutamine and ATP through an activated phospho-Asp-tRNA(Asn) or phospho-Glu-tRNA(Gln). This is Aspartyl/glutamyl-tRNA(Asn/Gln) amidotransferase subunit B from Thermus thermophilus (strain ATCC 27634 / DSM 579 / HB8).